The sequence spans 607 residues: Rap1 GTPase-GDP dissociation stimulator 1 (607 aa).

The short motif at 4–13 is the Nuclear export signal (NES) element; sequence LSDTLKKLKI. ARM repeat units lie at residues 89–131 and 170–211; these read GLIS…DQAG and DSLQ…NLAE. The tract at residues 122–170 is prevents binding to prenylated RHOA; that stretch reads EGRSAVDQAGGAQIVIDHLRSLCSITDPANEKLLTVFCGMLMNYSNEND. Lysine 230 is modified (N6-acetyllysine). The segment at 239-255 is interacts with polybasic regions in GTPases; that stretch reads DKREMIFEVLAPLAEND. ARM repeat units follow at residues 347–390, 391–431, and 479–519; these read DANC…NLAI, PVIN…MLID, and SKDV…LIAA. Residues 379 to 428 are critical for catalytic activity; that stretch reads HAALSALRNLAIPVINKAKMLSAGVTEAVLKFLKSEMPPVQFKLLGTLRM.

As to quaternary structure, interacts with RABL3. Interacts with RHOT1. In terms of assembly, interacts with unprenylated RHOA; the interaction is direct. Interacts with RAP1A. Interacts with KRAS. Interacts with RAC1. Interacts with RAP1B. Preferentially interacts with unprenylated GTPases that will become geranylgeranylated. May also interact with prenylated GTPases. Interacts with prenylated RHOA; the interaction is direct and in a 1:1 stoichiometry. Interacts with RAP1A. Interacts with KRAS. Interacts with RAC1. Interacts with RAP1B. Preferentially interacts with prenylated GTPases. Forms covalent cross-links mediated by transglutaminase TGM2, between a glutamine and the epsilon-amino group of a lysine residue, forming homopolymers and heteropolymers.

Its subcellular location is the cytoplasm. The protein localises to the cytosol. The protein resides in the endoplasmic reticulum. It localises to the mitochondrion. It is found in the nucleus. Functionally, acts as a GEF (guanine nucleotide exchange factor) for the Rho family of small GTP-binding proteins (G proteins) that stimulates the dissociation of GDP to enable subsequent binding of GTP. Additionally, appears to chaperone the processing and/or trafficking of small GTPases containing a C-terminal polybasic region independently of GEF activity. Targets include RAP1A/RAP1B, RHOA, RHOB, RHOC, RAC1 and KRAS. Regulates mitochondrial dynamics by controlling RHOT function to promote mitochondrial fission during high calcium conditions. Able to promote the Ca(2+) release from the endoplasmic reticulum via both inositol trisphosphate (Ins3P) and ryanodine sensitive receptors leading to a enhanced mitochondrial Ca(2+) uptake. Acts as a GEF (guanine nucleotide exchange factor) for unprenylated RHOA. Chaperones the entry and passage of small GTPases through the prenylation pathway. Recognizes the last amino acid in the GTPase C-terminal CAAX motif with a preference for 'Leu' over 'Met', indicating involvement in the geranylgeranylation pathway. Its function is as follows. Acts as a GEF (guanine nucleotide exchange factor) for prenylated RHOA. Acts as a GEF for RHOC. Chaperones the downstream trafficking and/or processing of small newly prenylated GTPases. Escorts RAC1 to the nucleus. In Homo sapiens (Human), this protein is Rap1 GTPase-GDP dissociation stimulator 1.